A 469-amino-acid chain; its full sequence is Putative dipeptidase SAB1611c (469 aa).

His84 is a Zn(2+) binding site. Asp86 is a catalytic residue. Asp115 lines the Zn(2+) pocket. The active-site Proton acceptor is Glu149. 3 residues coordinate Zn(2+): Glu150, Asp173, and His440.

The protein belongs to the peptidase M20A family. Zn(2+) is required as a cofactor.

The protein is Putative dipeptidase SAB1611c of Staphylococcus aureus (strain bovine RF122 / ET3-1).